Consider the following 356-residue polypeptide: D-alanine--D-alanine ligase (356 aa).

Residues 134–339 enclose the ATP-grasp domain; that stretch reads KQLFEHRGLP…YSDLITKLID (206 aa). An ATP-binding site is contributed by 167–222; it reads KDKLTYPVFVKPANLGSSVGISKCNNEDELKSGIEEAFQFDRKLVIEQGINAREVE. Mg(2+)-binding residues include D293, E306, and N308.

This sequence belongs to the D-alanine--D-alanine ligase family. Mg(2+) serves as cofactor. It depends on Mn(2+) as a cofactor.

It is found in the cytoplasm. The catalysed reaction is 2 D-alanine + ATP = D-alanyl-D-alanine + ADP + phosphate + H(+). The protein operates within cell wall biogenesis; peptidoglycan biosynthesis. Functionally, cell wall formation. The polypeptide is D-alanine--D-alanine ligase (Staphylococcus haemolyticus (strain JCSC1435)).